A 381-amino-acid chain; its full sequence is Guanine nucleotide-binding protein G(s) subunit alpha (381 aa).

Cysteine 3 is lipidated: S-palmitoyl cysteine. The 346-residue stretch at 36-381 (ALHRLLLLGA…RMHLQKYELL (346 aa)) folds into the G-alpha domain. Residues 39 to 52 (RLLLLGAGESGKST) form a G1 motif region. GTP contacts are provided by residues 44-51 (GAGESGKS), 183-189 (LRCRVLT), 208-212 (GVGGQ), 277-280 (NKQD), and alanine 353. Mg(2+) contacts are provided by serine 51 and threonine 189. Positions 181–189 (DILRCRVLT) are G2 motif. The segment at 204 to 213 (FYMFGVGGQR) is G3 motif. The tract at residues 273–280 (ILFLNKQD) is G4 motif. Residues 351-356 (TTAVDT) are G5 motif.

The protein belongs to the G-alpha family. G(s) subfamily. In terms of assembly, g proteins are composed of 3 units; alpha, beta and gamma. The alpha chain contains the guanine nucleotide binding site.

Its function is as follows. Guanine nucleotide-binding proteins (G proteins) are involved as modulators or transducers in various transmembrane signaling systems. The G(s) protein is involved in hormonal regulation of adenylate cyclase: it activates the cyclase in response to beta-adrenergic stimuli. This is Guanine nucleotide-binding protein G(s) subunit alpha from Geodia cydonium (Sponge).